A 199-amino-acid polypeptide reads, in one-letter code: Probable chemoreceptor glutamine deamidase CheD (199 aa).

This sequence belongs to the CheD family.

The enzyme catalyses L-glutaminyl-[protein] + H2O = L-glutamyl-[protein] + NH4(+). In terms of biological role, probably deamidates glutamine residues to glutamate on methyl-accepting chemotaxis receptors (MCPs), playing an important role in chemotaxis. The chain is Probable chemoreceptor glutamine deamidase CheD from Nitratidesulfovibrio vulgaris (strain ATCC 29579 / DSM 644 / CCUG 34227 / NCIMB 8303 / VKM B-1760 / Hildenborough) (Desulfovibrio vulgaris).